The sequence spans 165 residues: Zinc finger C2H2 protein ECU11_0990 (165 aa).

2 stretches are compositionally biased toward basic and acidic residues: residues 1–10 and 19–32; these read MEAESPKERV and DPER…DTSS. The interval 1 to 38 is disordered; that stretch reads MEAESPKERVQGVSGESWDPERGVKEREDTSSKKGKGV. 2 consecutive C2H2-type zinc fingers follow at residues 103–125 and 136–158; these read FGCE…KAQH and LFCP…SRYH.

The protein is Zinc finger C2H2 protein ECU11_0990 of Encephalitozoon cuniculi (strain GB-M1) (Microsporidian parasite).